Reading from the N-terminus, the 159-residue chain is D-aminoacyl-tRNA deacylase (159 aa).

The Gly-cisPro motif, important for rejection of L-amino acids motif lies at 146-147 (GP).

The protein belongs to the DTD family. As to quaternary structure, homodimer.

The protein resides in the cytoplasm. It carries out the reaction glycyl-tRNA(Ala) + H2O = tRNA(Ala) + glycine + H(+). The enzyme catalyses a D-aminoacyl-tRNA + H2O = a tRNA + a D-alpha-amino acid + H(+). Functionally, an aminoacyl-tRNA editing enzyme that deacylates mischarged D-aminoacyl-tRNAs. Also deacylates mischarged glycyl-tRNA(Ala), protecting cells against glycine mischarging by AlaRS. Acts via tRNA-based rather than protein-based catalysis; rejects L-amino acids rather than detecting D-amino acids in the active site. By recycling D-aminoacyl-tRNA to D-amino acids and free tRNA molecules, this enzyme counteracts the toxicity associated with the formation of D-aminoacyl-tRNA entities in vivo and helps enforce protein L-homochirality. The chain is D-aminoacyl-tRNA deacylase from Bifidobacterium adolescentis (strain ATCC 15703 / DSM 20083 / NCTC 11814 / E194a).